A 568-amino-acid polypeptide reads, in one-letter code: Proline--tRNA ligase (568 aa).

It belongs to the class-II aminoacyl-tRNA synthetase family. ProS type 1 subfamily. Homodimer.

It is found in the cytoplasm. The enzyme catalyses tRNA(Pro) + L-proline + ATP = L-prolyl-tRNA(Pro) + AMP + diphosphate. Its function is as follows. Catalyzes the attachment of proline to tRNA(Pro) in a two-step reaction: proline is first activated by ATP to form Pro-AMP and then transferred to the acceptor end of tRNA(Pro). As ProRS can inadvertently accommodate and process non-cognate amino acids such as alanine and cysteine, to avoid such errors it has two additional distinct editing activities against alanine. One activity is designated as 'pretransfer' editing and involves the tRNA(Pro)-independent hydrolysis of activated Ala-AMP. The other activity is designated 'posttransfer' editing and involves deacylation of mischarged Ala-tRNA(Pro). The misacylated Cys-tRNA(Pro) is not edited by ProRS. This Lysinibacillus sphaericus (strain C3-41) protein is Proline--tRNA ligase.